We begin with the raw amino-acid sequence, 115 residues long: Synaptobrevin homolog 2 (115 aa).

Low complexity predominate over residues 1 to 16 (MSSSVPYDPYVPPEES). The tract at residues 1-28 (MSSSVPYDPYVPPEESNSGANPNSQNKT) is disordered. Over 1–93 (MSSSVPYDPY…MWWKDLKMRM (93 aa)) the chain is Cytoplasmic. Residues 17–28 (NSGANPNSQNKT) show a composition bias toward polar residues. One can recognise a v-SNARE coiled-coil homology domain in the interval 27–87 (KTAALRQEID…NRVRKQMWWK (61 aa)). Residue S58 is modified to Phosphoserine. A Glycyl lysine isopeptide (Lys-Gly) (interchain with G-Cter in ubiquitin) cross-link involves residue K62. Residue C94 is the site of S-palmitoyl cysteine attachment. Residues 94–112 (CLFLVVIILLVVIIVPIVV) form a helical; Anchor for type IV membrane protein membrane-spanning segment. At 113-115 (HFS) the chain is on the vesicular side.

It belongs to the synaptobrevin family. In terms of processing, palmitoylated by SWF1.

The protein resides in the endomembrane system. In terms of biological role, SNC1 and SNC2 are vesicle-targeting proteins essential for normal secretory traffic between the Golgi and the plasma membrane. They may also be involved in vesicle fusion. The protein is Synaptobrevin homolog 2 (SNC2) of Saccharomyces cerevisiae (strain ATCC 204508 / S288c) (Baker's yeast).